A 291-amino-acid chain; its full sequence is uncharacterized protein (291 aa).

One can recognise an HTH tetR-type domain in the interval 2–62; sequence KEKEKLIIET…SMLNYYYDKT (61 aa). Positions 25-44 form a DNA-binding region, H-T-H motif; it reads SVQEIAKECKISKGAFYIYF.

This is an uncharacterized protein from Bacillus subtilis (strain 168).